Reading from the N-terminus, the 481-residue chain is Keratin, type II cuticular Hb1 (481 aa).

A head region spans residues 1–106 (MTCGSGFCGR…PNAQCVKHEE (106 aa)). An IF rod domain is found at 106–417 (EKEQIKCLNS…RLLEGEEQRL (312 aa)). Residues 107-141 (KEQIKCLNSKFAAFIDKVRFLEQQNKLLETKWQFY) form a coil 1A region. A linker 1 region spans residues 142–151 (QNRKCCESNM). The tract at residues 152–252 (EPLFEGYIEA…YDEETRILHS (101 aa)) is coil 1B. A Glycyl lysine isopeptide (Lys-Gly) (interchain with G-Cter in SUMO1) cross-link involves residue K212. The linker 12 stretch occupies residues 253-269 (HISDTSIVVKMDNSRDL). A coil 2 region spans residues 270–413 (NMDCVVAEIK…TTYRRLLEGE (144 aa)). Residues 414 to 481 (EQRLCEGVGA…GSAVSCGRKC (68 aa)) are tail.

This sequence belongs to the intermediate filament family. In terms of assembly, heterotetramer of two type I and two type II keratins. In terms of tissue distribution, expressed in dorsal skin.

The protein is Keratin, type II cuticular Hb1 of Mus musculus (Mouse).